Reading from the N-terminus, the 171-residue chain is Shikimate kinase (171 aa).

14 to 19 (GAGKST) is a binding site for ATP. S18 lines the Mg(2+) pocket. The substrate site is built by D36, R60, and G82. R120 provides a ligand contact to ATP. A substrate-binding site is contributed by R139. Residue Q156 coordinates ATP.

It belongs to the shikimate kinase family. In terms of assembly, monomer. The cofactor is Mg(2+).

It localises to the cytoplasm. The enzyme catalyses shikimate + ATP = 3-phosphoshikimate + ADP + H(+). The protein operates within metabolic intermediate biosynthesis; chorismate biosynthesis; chorismate from D-erythrose 4-phosphate and phosphoenolpyruvate: step 5/7. In terms of biological role, catalyzes the specific phosphorylation of the 3-hydroxyl group of shikimic acid using ATP as a cosubstrate. The chain is Shikimate kinase from Pseudoalteromonas atlantica (strain T6c / ATCC BAA-1087).